The chain runs to 101 residues: Acylphosphatase (101 aa).

In terms of domain architecture, Acylphosphatase-like spans 15–101 (RMYARVYGLV…KGEFEDFETY (87 aa)). Residues Arg30 and Asn48 contribute to the active site.

Belongs to the acylphosphatase family.

The enzyme catalyses an acyl phosphate + H2O = a carboxylate + phosphate + H(+). The sequence is that of Acylphosphatase (acyP) from Saccharolobus solfataricus (strain ATCC 35092 / DSM 1617 / JCM 11322 / P2) (Sulfolobus solfataricus).